A 22-amino-acid chain; its full sequence is Caerin-3.5 (22 aa).

Lysine 22 bears the Lysine amide mark.

In terms of tissue distribution, expressed by the skin dorsal glands.

It localises to the secreted. Its function is as follows. Shows significant activity against Gram-positive organisms, but is less effective against Gram-negative organisms. In Ranoidea gracilenta (Dainty green tree frog), this protein is Caerin-3.5.